We begin with the raw amino-acid sequence, 323 residues long: Acetyl-coenzyme A carboxylase carboxyl transferase subunit alpha (323 aa).

A CoA carboxyltransferase C-terminal domain is found at 39–293; that stretch reads RLSKKSQQLT…RRALADSLRQ (255 aa).

Belongs to the AccA family. As to quaternary structure, acetyl-CoA carboxylase is a heterohexamer composed of biotin carboxyl carrier protein (AccB), biotin carboxylase (AccC) and two subunits each of ACCase subunit alpha (AccA) and ACCase subunit beta (AccD).

The protein resides in the cytoplasm. It catalyses the reaction N(6)-carboxybiotinyl-L-lysyl-[protein] + acetyl-CoA = N(6)-biotinyl-L-lysyl-[protein] + malonyl-CoA. It functions in the pathway lipid metabolism; malonyl-CoA biosynthesis; malonyl-CoA from acetyl-CoA: step 1/1. Functionally, component of the acetyl coenzyme A carboxylase (ACC) complex. First, biotin carboxylase catalyzes the carboxylation of biotin on its carrier protein (BCCP) and then the CO(2) group is transferred by the carboxyltransferase to acetyl-CoA to form malonyl-CoA. The polypeptide is Acetyl-coenzyme A carboxylase carboxyl transferase subunit alpha (Burkholderia vietnamiensis (strain G4 / LMG 22486) (Burkholderia cepacia (strain R1808))).